A 337-amino-acid chain; its full sequence is Terpene synthase 4 (337 aa).

Mg(2+)-binding residues include aspartate 94 and aspartate 98. Residues 94-98 (DDIFD) carry the D(D/E)XX(D/E) motif motif. Arginine 195 is a binding site for substrate. Mg(2+) is bound by residues asparagine 241, serine 245, and glutamate 249. An NSE motif motif is present at residues 241 to 249 (NDIYSYHRE). Residues 320–327 (WSESCTRY) carry the WxxxxxRY motif motif.

It belongs to the terpene synthase family. Mg(2+) serves as cofactor.

It catalyses the reaction (2E,6E)-farnesyl diphosphate = alpha-muurolene + diphosphate. The enzyme catalyses (2E,6E)-farnesyl diphosphate = (-)-(E)-beta-caryophyllene + diphosphate. In terms of biological role, terpene synthase that catalyzes the cyclization of farnesyl diphosphate (FPP) into alpha-muurolene, (-)-beta-caryophyllene, and one unidentified sesquiterpene. TPS4 shows only trace monoterpene synthase activity with geranyl diphosphate (GPP) as substrate and produces very small amounts of myrcene. P.polycephalum has a unique biology and these volatile terpenoids could function in internal communication of P.polycephalum, to mark the territory that have been explored, or they may be involved in chemotaxis. This is Terpene synthase 4 from Physarum polycephalum (Slime mold).